The chain runs to 72 residues: SRY-related protein MG44 (72 aa).

Residues 1–69 (VKRPMNAFMV…KHMADYPNYK (69 aa)) constitute a DNA-binding region (HMG box).

The protein localises to the nucleus. In Tarentola mauritanica (Common wall gecko), this protein is SRY-related protein MG44.